We begin with the raw amino-acid sequence, 210 residues long: Keratin-associated protein 26-1 (210 aa).

Belongs to the PMG family. As to quaternary structure, interacts with hair keratins. As to expression, localized high up in the well differentiated portion of the hair follicle cuticle (about 10-15 cell layers above the apex of the dermal papilla).

In the hair cortex, hair keratin intermediate filaments are embedded in an interfilamentous matrix, consisting of hair keratin-associated proteins (KRTAP), which are essential for the formation of a rigid and resistant hair shaft through their extensive disulfide bond cross-linking with abundant cysteine residues of hair keratins. The matrix proteins include the high-sulfur and high-glycine-tyrosine keratins. In Homo sapiens (Human), this protein is Keratin-associated protein 26-1 (KRTAP26-1).